Consider the following 239-residue polypeptide: ATP synthase subunit a (239 aa).

Helical transmembrane passes span 17 to 37 (GTVCMMVLLTCLIVFFLVYFF), 75 to 95 (FHLLAFTLFLFVFVANNIGLI), 113 to 133 (DPFVTLTLAFIMITLTHLFGV), 182 to 202 (LLTLIANMMNNLGWFSLPLAI), and 206 to 226 (MVWIAFSLFIGSIQAFVFVTL).

This sequence belongs to the ATPase A chain family. In terms of assembly, F-type ATPases have 2 components, CF(1) - the catalytic core - and CF(0) - the membrane proton channel. CF(1) has five subunits: alpha(3), beta(3), gamma(1), delta(1), epsilon(1). CF(0) has three main subunits: a(1), b(2) and c(9-12). The alpha and beta chains form an alternating ring which encloses part of the gamma chain. CF(1) is attached to CF(0) by a central stalk formed by the gamma and epsilon chains, while a peripheral stalk is formed by the delta and b chains.

The protein resides in the cell membrane. In terms of biological role, key component of the proton channel; it plays a direct role in the translocation of protons across the membrane. This chain is ATP synthase subunit a, found in Enterococcus hirae (strain ATCC 9790 / DSM 20160 / JCM 8729 / LMG 6399 / NBRC 3181 / NCIMB 6459 / NCDO 1258 / NCTC 12367 / WDCM 00089 / R).